The primary structure comprises 309 residues: Phytoene synthase (309 aa).

This sequence belongs to the phytoene/squalene synthase family.

It catalyses the reaction 2 (2E,6E,10E)-geranylgeranyl diphosphate = 15-cis-phytoene + 2 diphosphate. It functions in the pathway carotenoid biosynthesis; phytoene biosynthesis; all-trans-phytoene from geranylgeranyl diphosphate: step 1/1. In terms of biological role, catalyzes the reaction from prephytoene diphosphate to phytoene. The chain is Phytoene synthase (crtB) from Arthrospira platensis (Spirulina platensis).